The chain runs to 703 residues: Prolyl 3-hydroxylase 2 (703 aa).

The first 21 residues, 1–21 (MRESTWVSLLLLLLLPTPQRG), serve as a signal peptide directing secretion. Residues 17-40 (TPQRGGPQDGRRSPEPEPERGPLQ) form a disordered region. The span at 25–36 (DGRRSPEPEPER) shows a compositional bias: basic and acidic residues. TPR repeat units follow at residues 42–75 (FDLL…HRRL), 144–177 (RVPY…NPEH), 205–238 (HLES…YFNE), and 301–334 (PLHY…HPDN). N-linked (GlcNAc...) asparagine glycosylation is found at N444 and N544. The Fe2OG dioxygenase domain maps to 552-666 (THMVCRTALS…RCAVALWFTL (115 aa)). The Fe cation site is built by H575, D577, and H647. The active site involves R657. The Prevents secretion from ER signature appears at 700–703 (KDEL).

This sequence belongs to the leprecan family. The cofactor is Fe cation. L-ascorbate is required as a cofactor. Detected in kidney. Detected on kidney tubular cells, pancreas acinar cells, Schwann cells of the peripheral nerve in the pinna, and in tunica adventitia, the smooth muscle layer of the aortic wall (at protein level). Detected in lung, skeletal muscle and kidney. Detected in kidney glomeruli and in prehypertrophic regions of long bone from neonates. In the eye, detected in the epithelial layer of the cornea and at lower levels in the sclera at the posterior end of the eye.

The protein resides in the endoplasmic reticulum. It is found in the sarcoplasmic reticulum. It localises to the golgi apparatus. It carries out the reaction L-prolyl-[collagen] + 2-oxoglutarate + O2 = trans-3-hydroxy-L-prolyl-[collagen] + succinate + CO2. Functionally, prolyl 3-hydroxylase that catalyzes the post-translational formation of 3-hydroxyproline on collagens. Contributes to proline 3-hydroxylation of collagen COL4A1 and COL1A1 in tendons, the eye sclera and in the eye lens capsule. Has high activity with the type IV collagen COL4A1, and lower activity with COL1A1. Catalyzes hydroxylation of the first Pro in Gly-Pro-Hyp sequences where Hyp is 4-hydroxyproline. Has no activity on substrates that have proline instead of 4-hydroxyproline in the third position. This chain is Prolyl 3-hydroxylase 2, found in Mus musculus (Mouse).